The primary structure comprises 200 residues: MRLTGRGLRCVRGGRQVFAGLDVDAAAGEAVAVVGANGAGKTSLLRLIAGLLALAGGAIALEGGDSELTLAEQAHYLGHRDALKPSLSVAENLIFWQQFLGGEPADAQASLAAVGLGHIAHLPAAYLSAGQRRRLSLARLTAVRRPLWLLDEPTSALDAEGQAMFARLMTAHLESGGLLVAATHTPLGIAARELRIGGAA.

Residues 1 to 199 (MRLTGRGLRC…AARELRIGGA (199 aa)) enclose the ABC transporter domain. 35 to 42 (GANGAGKT) contacts ATP.

Belongs to the ABC transporter superfamily. CcmA exporter (TC 3.A.1.107) family. As to quaternary structure, the complex is composed of two ATP-binding proteins (CcmA) and two transmembrane proteins (CcmB).

It localises to the cell inner membrane. The catalysed reaction is heme b(in) + ATP + H2O = heme b(out) + ADP + phosphate + H(+). Functionally, part of the ABC transporter complex CcmAB involved in the biogenesis of c-type cytochromes; once thought to export heme, this seems not to be the case, but its exact role is uncertain. Responsible for energy coupling to the transport system. In Rhodopseudomonas palustris (strain BisB18), this protein is Cytochrome c biogenesis ATP-binding export protein CcmA.